Consider the following 298-residue polypeptide: Inosose dehydratase (298 aa).

It belongs to the IolE/MocC family. Glutathione serves as cofactor. It depends on Co(2+) as a cofactor. Requires Mn(2+) as cofactor.

The enzyme catalyses scyllo-inosose = 3D-3,5/4-trihydroxycyclohexane-1,2-dione + H2O. Functionally, catalyzes the dehydration of inosose (2-keto-myo-inositol, 2KMI or 2,4,6/3,5-pentahydroxycyclohexanone) to 3D-(3,5/4)-trihydroxycyclohexane-1,2-dione (D-2,3-diketo-4-deoxy-epi-inositol). The protein is Inosose dehydratase of Glaesserella parasuis serovar 5 (strain SH0165) (Haemophilus parasuis).